The primary structure comprises 529 residues: Bifunctional purine biosynthesis protein PurH (529 aa).

One can recognise an MGS-like domain in the interval 1 to 148 (MQQRRPVRRA…KNHKDVAIVV (148 aa)). The residue at position 287 (Lys-287) is an N6-acetyllysine.

Belongs to the PurH family.

It carries out the reaction (6R)-10-formyltetrahydrofolate + 5-amino-1-(5-phospho-beta-D-ribosyl)imidazole-4-carboxamide = 5-formamido-1-(5-phospho-D-ribosyl)imidazole-4-carboxamide + (6S)-5,6,7,8-tetrahydrofolate. The catalysed reaction is IMP + H2O = 5-formamido-1-(5-phospho-D-ribosyl)imidazole-4-carboxamide. It participates in purine metabolism; IMP biosynthesis via de novo pathway; 5-formamido-1-(5-phospho-D-ribosyl)imidazole-4-carboxamide from 5-amino-1-(5-phospho-D-ribosyl)imidazole-4-carboxamide (10-formyl THF route): step 1/1. Its pathway is purine metabolism; IMP biosynthesis via de novo pathway; IMP from 5-formamido-1-(5-phospho-D-ribosyl)imidazole-4-carboxamide: step 1/1. In Escherichia fergusonii (strain ATCC 35469 / DSM 13698 / CCUG 18766 / IAM 14443 / JCM 21226 / LMG 7866 / NBRC 102419 / NCTC 12128 / CDC 0568-73), this protein is Bifunctional purine biosynthesis protein PurH.